The sequence spans 362 residues: Methylthioribose-1-phosphate isomerase (362 aa).

Substrate is bound by residues 49 to 51 (RGA), Arg89, and Gln201. The active-site Proton donor is Asp242. 252–253 (NK) contributes to the substrate binding site.

The protein belongs to the eIF-2B alpha/beta/delta subunits family. MtnA subfamily.

The enzyme catalyses 5-(methylsulfanyl)-alpha-D-ribose 1-phosphate = 5-(methylsulfanyl)-D-ribulose 1-phosphate. Its pathway is amino-acid biosynthesis; L-methionine biosynthesis via salvage pathway; L-methionine from S-methyl-5-thio-alpha-D-ribose 1-phosphate: step 1/6. Catalyzes the interconversion of methylthioribose-1-phosphate (MTR-1-P) into methylthioribulose-1-phosphate (MTRu-1-P). In Leptospira borgpetersenii serovar Hardjo-bovis (strain JB197), this protein is Methylthioribose-1-phosphate isomerase.